Reading from the N-terminus, the 298-residue chain is MAGQLREYRRRIRSVQSTKKITRAMELIAASRIAKARARVAAARPYAEEITRVIEAVAAQTTIDHPLTTERPGAARAAVVVITSDRGLAGGYSSNALRRTGELIELLHSEGKETDLHVVGRKGTGYYRFRGRAMSGEYTGFSEQPSYADAKSVADALIAAFIATSENGGVDEIHVVHTEYVSAITQTPVARRLLPMVLTETDEPPRGGPLPQYEFEPSAEGVLDALLPRYVESRLYAALLESAASESAARQRAMKSATDNAEDLIKRYTRQANRARQDAITQEISEIVGGANALASGT.

Belongs to the ATPase gamma chain family. As to quaternary structure, F-type ATPases have 2 components, CF(1) - the catalytic core - and CF(0) - the membrane proton channel. CF(1) has five subunits: alpha(3), beta(3), gamma(1), delta(1), epsilon(1). CF(0) has three main subunits: a, b and c.

It localises to the cell membrane. Produces ATP from ADP in the presence of a proton gradient across the membrane. The gamma chain is believed to be important in regulating ATPase activity and the flow of protons through the CF(0) complex. The polypeptide is ATP synthase gamma chain (Frankia casuarinae (strain DSM 45818 / CECT 9043 / HFP020203 / CcI3)).